A 276-amino-acid chain; its full sequence is MLLRFTKMHGLGNDFMVLDLVSQHAHIQPKHAKQWGDRNTGIGFDQLLIVEAPSNPDVDFRYRIFNADGSEVEQCGNGARCFARFVLDKRLTAKKRIRVETKGGIIELDVRNDGQVCVDMGPPRFVPADIPFIADEQALSYPLEVDGQVHQIAAVSMGNPHSVLRVDDVRTAPVHELGPKIEHHPRFPQRVNAGFIQVVDRHRANLRVWERGAGETQACGTGACAAAVAAIAQGWMDSPVTIDLPGGRLSIEWAGPGKPVLMTGPAVRVFEGQVRL.

Substrate-binding residues include Asn13, Gln46, and Asn66. Residue Cys75 is the Proton donor of the active site. Residues 76-77, Asn159, Asn192, and 210-211 contribute to the substrate site; these read GN and ER. Residue Cys219 is the Proton acceptor of the active site. Position 220–221 (220–221) interacts with substrate; it reads GT.

This sequence belongs to the diaminopimelate epimerase family. As to quaternary structure, homodimer.

The protein localises to the cytoplasm. The catalysed reaction is (2S,6S)-2,6-diaminopimelate = meso-2,6-diaminopimelate. Its pathway is amino-acid biosynthesis; L-lysine biosynthesis via DAP pathway; DL-2,6-diaminopimelate from LL-2,6-diaminopimelate: step 1/1. Catalyzes the stereoinversion of LL-2,6-diaminopimelate (L,L-DAP) to meso-diaminopimelate (meso-DAP), a precursor of L-lysine and an essential component of the bacterial peptidoglycan. The sequence is that of Diaminopimelate epimerase from Pseudomonas entomophila (strain L48).